A 350-amino-acid polypeptide reads, in one-letter code: Fe(2+) transport protein 2 (350 aa).

Residues 1 to 21 (MATTKLVYILLILFTFTVSPA) form the signal peptide. Topologically, residues 22–47 (ISTAPEHCDSGFDNPCINKAKALPLK) are extracellular. A helical membrane pass occupies residues 48-68 (IVAIVAILTTSLIGVTSPLFS). Residues 69–80 (RYISFLRPDGNG) are Cytoplasmic-facing. The chain crosses the membrane as a helical span at residues 81–101 (FMIVKCFSSGIILGTGFMHVL). The Extracellular portion of the chain corresponds to 102–120 (PDSFEMLSSKCLSDNPWHK). A helical membrane pass occupies residues 121–141 (FPFAGFVAMMSGLVTLAIDSI). The Cytoplasmic segment spans residues 142–195 (TTSLYTGKNSVGPVPDEEYGIDQEKAIHMVGHNHSHGHGVVLATKDDGQLLRYQ). The chain crosses the membrane as a helical span at residues 196 to 216 (VIAMVLEVGILFHSVVIGLSL). Topologically, residues 217 to 227 (GATNDSCTIKG) are extracellular. Residues 228–248 (LIIALCFHHLFEGIGLGGCIL) traverse the membrane as a helical segment. Residues 249-257 (QADFTNVKK) are Cytoplasmic-facing. Residues 258–278 (FLMAFFFTGTTPCGIFLGIAL) form a helical membrane-spanning segment. Over 279-289 (SSIYRDNSPTA) the chain is Extracellular. Residues 290 to 310 (LITIGLLNACSAGMLIYMALV) form a helical membrane-spanning segment. At 311–329 (DLLATEFMGSMLQGSIKLQ) the chain is on the cytoplasmic side. Residues 330–350 (IKCFTAALLGCAVMSVVAVWA) form a helical membrane-spanning segment.

Belongs to the ZIP transporter (TC 2.A.5) family. As to expression, expressed in the external cell layers of the root subapical zone.

Its subcellular location is the cell membrane. Functionally, high-affinity iron transporter that mediates under iron-deficiency the iron uptake from the rhizosphere across the plasma membrane in the root epidermal layer. Could also be capable of transporting zinc ions. The polypeptide is Fe(2+) transport protein 2 (IRT2) (Arabidopsis thaliana (Mouse-ear cress)).